A 537-amino-acid polypeptide reads, in one-letter code: CTP synthase (537 aa).

Residues 1 to 265 are amidoligase domain; the sequence is MVHFIFVTGG…DNKVLKFFNI (265 aa). Position 13 (S13) interacts with CTP. S13 lines the UTP pocket. Residues 14-19 and D71 each bind ATP; that span reads SLGKGL. Residues D71 and E139 each contribute to the Mg(2+) site. Residues 146–148 and K222 each bind CTP; that span reads DIE. K222 provides a ligand contact to UTP. Residues 290 to 536 enclose the Glutamine amidotransferase type-1 domain; the sequence is RIAIIAKYHK…IKAAIEYNKC (247 aa). G352 provides a ligand contact to L-glutamine. C379 (nucleophile; for glutamine hydrolysis) is an active-site residue. L-glutamine-binding positions include 380 to 383, E403, and R464; that span reads FGMQ. Catalysis depends on residues H509 and E511.

The protein belongs to the CTP synthase family. As to quaternary structure, homotetramer.

The catalysed reaction is UTP + L-glutamine + ATP + H2O = CTP + L-glutamate + ADP + phosphate + 2 H(+). It carries out the reaction L-glutamine + H2O = L-glutamate + NH4(+). The enzyme catalyses UTP + NH4(+) + ATP = CTP + ADP + phosphate + 2 H(+). Its pathway is pyrimidine metabolism; CTP biosynthesis via de novo pathway; CTP from UDP: step 2/2. With respect to regulation, allosterically activated by GTP, when glutamine is the substrate; GTP has no effect on the reaction when ammonia is the substrate. The allosteric effector GTP functions by stabilizing the protein conformation that binds the tetrahedral intermediate(s) formed during glutamine hydrolysis. Inhibited by the product CTP, via allosteric rather than competitive inhibition. Catalyzes the ATP-dependent amination of UTP to CTP with either L-glutamine or ammonia as the source of nitrogen. Regulates intracellular CTP levels through interactions with the four ribonucleotide triphosphates. The sequence is that of CTP synthase from Rickettsia conorii (strain ATCC VR-613 / Malish 7).